Here is a 410-residue protein sequence, read N- to C-terminus: Zinc finger protein 322 (410 aa).

8 consecutive C2H2-type zinc fingers follow at residues 81-103 (YRCDMCEKTFIQSSDLISHQRIH), 109-131 (YKCSKCEKSFWHHLALSGHQRTH), 137-159 (YTCDICGKNFGQSSDLLVHQRSH), 165-187 (YLCNECDKCFSRSTNLIRHRRTH), 193-215 (FKCLECEKAFSGKSDLISHQRTH), 221-243 (YKCNKCEKSYRHRSAFIVHKRVH), 249-271 (YKCGACEKCFGQKSDLIVHQRVH), and 277-299 (YKCLECMRSFTRSANLIRHQATH). Residues 303 to 325 (FKCLEYEKSFNCSSDFIVHQRIH) form a C2H2-type 9; degenerate zinc finger. A C2H2-type 10; degenerate zinc finger spans residues 361-383 (YKYSVCDKTFHHSSALLQHQTVH). S400 is subject to Phosphoserine.

It belongs to the krueppel C2H2-type zinc-finger protein family. As to quaternary structure, interacts with POU5F1.

The protein resides in the nucleus. The protein localises to the cytoplasm. In terms of biological role, transcriptional activator. Important for maintenance of pluripotency in embryonic stem cells. Binds directly to the POU5F1 distal enhancer and the NANOG proximal promoter, and enhances expression of both genes. Can also bind to numerous other gene promoters and regulates expression of many other pluripotency factors, either directly or indirectly. Promotes inhibition of MAPK signaling during embryonic stem cell differentiation. The chain is Zinc finger protein 322 (Znf322) from Mus musculus (Mouse).